We begin with the raw amino-acid sequence, 306 residues long: Tryptophan 2,3-dioxygenase (306 aa).

Residues 75-79 (FIIQH), Tyr-137, and Arg-141 contribute to the substrate site. His-264 contributes to the heme binding site. Thr-278 is a binding site for substrate.

Belongs to the tryptophan 2,3-dioxygenase family. In terms of assembly, homotetramer. It depends on heme as a cofactor.

The enzyme catalyses L-tryptophan + O2 = N-formyl-L-kynurenine. Its pathway is amino-acid degradation; L-tryptophan degradation via kynurenine pathway; L-kynurenine from L-tryptophan: step 1/2. In terms of biological role, heme-dependent dioxygenase that catalyzes the oxidative cleavage of the L-tryptophan (L-Trp) pyrrole ring and converts L-tryptophan to N-formyl-L-kynurenine. Catalyzes the oxidative cleavage of the indole moiety. The chain is Tryptophan 2,3-dioxygenase from Paraburkholderia phytofirmans (strain DSM 17436 / LMG 22146 / PsJN) (Burkholderia phytofirmans).